The primary structure comprises 154 residues: Transcriptional repressor NrdR (154 aa).

Residues 3 to 34 (CPYCQSEDTQVKDSRPAEDGAAIRRRRACPVC) fold into a zinc finger. The 91-residue stretch at 49-139 (LVVVKRTGRK…VYRNFREAKD (91 aa)) folds into the ATP-cone domain.

The protein belongs to the NrdR family. The cofactor is Zn(2+).

Negatively regulates transcription of bacterial ribonucleotide reductase nrd genes and operons by binding to NrdR-boxes. The sequence is that of Transcriptional repressor NrdR from Chelativorans sp. (strain BNC1).